A 251-amino-acid chain; its full sequence is MSYSKNNMLFKNVLNFKKNIPSHVAIIMDGNGKWARKRGKSRFFGHFSGFYAARRAISFALFHKLKILTLYAFSSDNWNRSPREIKVLMELFFYALSNETNNLNKYNIRLKVIGNKEKFNTVLKNKIRVVEKETLKNTGLLLNIAANYSGRWEILEAIKKIVVAIKCKNLSLNAITESTVSDFLLINEKIPVDLVIRTGGECRLSNFLVWQISYSELYFTNTLWPDFDRKEFKKAIDEFSNRERRFGRVSH.

The active site involves Asp-29. Mg(2+) is bound at residue Asp-29. Residues 30 to 33 (GNGK), Trp-34, Arg-42, His-46, and 74 to 76 (SSD) contribute to the substrate site. Residue Asn-77 is the Proton acceptor of the active site. Substrate-binding positions include Trp-78, Arg-80, Arg-197, and 203-205 (RLS). Glu-216 is a Mg(2+) binding site.

The protein belongs to the UPP synthase family. As to quaternary structure, homodimer. Requires Mg(2+) as cofactor.

The enzyme catalyses 8 isopentenyl diphosphate + (2E,6E)-farnesyl diphosphate = di-trans,octa-cis-undecaprenyl diphosphate + 8 diphosphate. Functionally, catalyzes the sequential condensation of isopentenyl diphosphate (IPP) with (2E,6E)-farnesyl diphosphate (E,E-FPP) to yield (2Z,6Z,10Z,14Z,18Z,22Z,26Z,30Z,34E,38E)-undecaprenyl diphosphate (di-trans,octa-cis-UPP). UPP is the precursor of glycosyl carrier lipid in the biosynthesis of bacterial cell wall polysaccharide components such as peptidoglycan and lipopolysaccharide. This chain is Ditrans,polycis-undecaprenyl-diphosphate synthase ((2E,6E)-farnesyl-diphosphate specific), found in Buchnera aphidicola subsp. Baizongia pistaciae (strain Bp).